The following is a 95-amino-acid chain: Selenoprotein K (95 aa).

The chain crosses the membrane as a helical span at residues 20 to 42; it reads LSFLTDMFWGITDFVVMFFQSII. The interval 47-95 is disordered; that stretch reads TRRGCQNSSSSTRYDDGRGPPGHPRRMGRINHGSGPSAPPMAGGGGUGR. Residue U93 is a non-standard amino acid, selenocysteine.

It belongs to the selenoprotein K family.

It is found in the endoplasmic reticulum membrane. It localises to the cell membrane. Functionally, required for Ca(2+) flux in immune cells and plays a role in T-cell proliferation and in T-cell and neutrophil migration. Involved in endoplasmic reticulum-associated degradation (ERAD) of soluble glycosylated proteins. Required for cell surface expression of CD36 and involved in macrophage uptake of low-density lipoprotein and in foam cell formation. Required for palmitoylation. In Xenopus laevis (African clawed frog), this protein is Selenoprotein K (selenok).